The following is an 86-amino-acid chain: Small ribosomal subunit protein bS16 (86 aa).

The protein belongs to the bacterial ribosomal protein bS16 family.

This chain is Small ribosomal subunit protein bS16, found in Xylella fastidiosa (strain 9a5c).